A 451-amino-acid polypeptide reads, in one-letter code: Exodeoxyribonuclease 7 large subunit (451 aa).

This sequence belongs to the XseA family. As to quaternary structure, heterooligomer composed of large and small subunits.

Its subcellular location is the cytoplasm. The catalysed reaction is Exonucleolytic cleavage in either 5'- to 3'- or 3'- to 5'-direction to yield nucleoside 5'-phosphates.. Its function is as follows. Bidirectionally degrades single-stranded DNA into large acid-insoluble oligonucleotides, which are then degraded further into small acid-soluble oligonucleotides. The polypeptide is Exodeoxyribonuclease 7 large subunit (Neisseria meningitidis serogroup A / serotype 4A (strain DSM 15465 / Z2491)).